Here is a 607-residue protein sequence, read N- to C-terminus: V-type proton ATPase catalytic subunit A (607 aa).

An ATP-binding site is contributed by 251–258 (GAFGCGKT).

Belongs to the ATPase alpha/beta chains family. V-ATPase is a heteromultimeric enzyme composed of a peripheral catalytic V1 complex (components A to H) attached to an integral membrane V0 proton pore complex (components: a, c, c', c'', d, e, f and VOA1).

It localises to the vacuole membrane. The catalysed reaction is ATP + H2O + 4 H(+)(in) = ADP + phosphate + 5 H(+)(out). Catalytic subunit of the V1 complex of vacuolar(H+)-ATPase (V-ATPase), a multisubunit enzyme composed of a peripheral complex (V1) that hydrolyzes ATP and a membrane integral complex (V0) that translocates protons. V-ATPase is responsible for acidifying and maintaining the pH of intracellular compartments. This is V-type proton ATPase catalytic subunit A (VMA1) from Encephalitozoon cuniculi (strain GB-M1) (Microsporidian parasite).